Here is a 227-residue protein sequence, read N- to C-terminus: Ubiquitin domain-containing protein 1 (227 aa).

Residues 1-35 are disordered; sequence MGNCVGRQRRERPAAPGHPRKRAGRNEPLKKERLK. Over residues 24–35 the composition is skewed to basic and acidic residues; the sequence is GRNEPLKKERLK. The region spanning 149-224 is the Ubiquitin-like domain; it reads FPLKVRLSTG…IQVIINQPPP (76 aa).

As to quaternary structure, interacts with UBTD1.

May be involved in the regulation of cellular senescence through a positive feedback loop with TP53. Is a TP53 downstream target gene that increases the stability of TP53 protein by promoting the ubiquitination and degradation of MDM2. The polypeptide is Ubiquitin domain-containing protein 1 (Ubtd1) (Rattus norvegicus (Rat)).